The sequence spans 317 residues: Ciliary microtubule inner protein 2A (317 aa).

The disordered stretch occupies residues 131 to 153 (TPDTPHPPCPPGRKGDSRDLGHP).

The protein belongs to the CIMIP2 family. As to quaternary structure, microtubule inner protein component of sperm flagellar doublet microtubules.

It is found in the cytoplasm. It localises to the cytoskeleton. The protein localises to the flagellum axoneme. In terms of biological role, microtubule inner protein (MIP) part of the dynein-decorated doublet microtubules (DMTs) in flagellum axoneme. Binds to the intra-tubulin interfaces. The protein is Ciliary microtubule inner protein 2A of Homo sapiens (Human).